A 92-amino-acid polypeptide reads, in one-letter code: MARSVWKGPFLDGYMLGKADKARASGRNEVIKIWSRRSTILPQFVGLTFGVYNGQKFIPVLVTENMIGHKFGEFSPTRTFYGHAVDKKAKRK.

It belongs to the universal ribosomal protein uS19 family.

Protein S19 forms a complex with S13 that binds strongly to the 16S ribosomal RNA. The sequence is that of Small ribosomal subunit protein uS19 from Paramagnetospirillum magneticum (strain ATCC 700264 / AMB-1) (Magnetospirillum magneticum).